Reading from the N-terminus, the 481-residue chain is Glycogen synthase (481 aa).

K15 contacts ADP-alpha-D-glucose.

It belongs to the glycosyltransferase 1 family. Bacterial/plant glycogen synthase subfamily.

The catalysed reaction is [(1-&gt;4)-alpha-D-glucosyl](n) + ADP-alpha-D-glucose = [(1-&gt;4)-alpha-D-glucosyl](n+1) + ADP + H(+). It functions in the pathway glycan biosynthesis; glycogen biosynthesis. In terms of biological role, synthesizes alpha-1,4-glucan chains using ADP-glucose. The protein is Glycogen synthase of Thermosipho melanesiensis (strain DSM 12029 / CIP 104789 / BI429).